We begin with the raw amino-acid sequence, 193 residues long: Pyridoxal 5'-phosphate synthase subunit PdxT (193 aa).

52–54 provides a ligand contact to L-glutamine; the sequence is GES. The active-site Nucleophile is Cys84. L-glutamine-binding positions include Arg111 and 139 to 140; that span reads IR. Catalysis depends on charge relay system residues His176 and Glu178.

The protein belongs to the glutaminase PdxT/SNO family. In the presence of PdxS, forms a dodecamer of heterodimers. Only shows activity in the heterodimer.

The catalysed reaction is aldehydo-D-ribose 5-phosphate + D-glyceraldehyde 3-phosphate + L-glutamine = pyridoxal 5'-phosphate + L-glutamate + phosphate + 3 H2O + H(+). It carries out the reaction L-glutamine + H2O = L-glutamate + NH4(+). Its pathway is cofactor biosynthesis; pyridoxal 5'-phosphate biosynthesis. Its function is as follows. Catalyzes the hydrolysis of glutamine to glutamate and ammonia as part of the biosynthesis of pyridoxal 5'-phosphate. The resulting ammonia molecule is channeled to the active site of PdxS. This chain is Pyridoxal 5'-phosphate synthase subunit PdxT, found in Pasteurella multocida (strain Pm70).